A 337-amino-acid chain; its full sequence is Schlafen family member 1 (337 aa).

The disordered stretch occupies residues 147–166; the sequence is AGGRSPSARPSDRPGDDTQE. A compositionally biased stretch (basic and acidic residues) spans 156–166; the sequence is PSDRPGDDTQE.

Belongs to the Schlafen family. As to quaternary structure, interacts with DNAJB6; promoting nuclear translocation and ability to promote cell-cycle arrest. In terms of tissue distribution, mainly expressed in the thymus, lymph node and spleen. Specifically expressed in T-lineage cells, but not in B-cells. Strongly up-regulated during the differentiation from CD4(+)CD8(+) double-positive (DP) to CD4(+) or CD8(+) single-positive (SP) thymocytes. Highly expressed in quiescent single-positive thymocytes and T-cells. The expression substantially decreases after TCR (T-cell receptor)-mediated activation.

It is found in the cytoplasm. The protein resides in the nucleus. In terms of biological role, protein expressed in resting T-cells, which is required for maintaining T-cells in the quiescent state. Acts by promoting cell-cycle arrest of T-cells through inhibiting the expression of cyclin-D1 (CCND1). This chain is Schlafen family member 1, found in Mus musculus (Mouse).